Here is a 765-residue protein sequence, read N- to C-terminus: Amine oxidase [copper-containing] 3 (765 aa).

Residues methionine 1–threonine 6 lie on the Cytoplasmic side of the membrane. Residues leucine 7–glycine 27 form a helical; Signal-anchor for type II membrane protein membrane-spanning segment. Topologically, residues arginine 28–asparagine 765 are extracellular. N-linked (GlcNAc...) asparagine glycosylation occurs at asparagine 137. A disulfide bond links cysteine 198 and cysteine 199. N-linked (GlcNAc...) asparagine glycans are attached at residues asparagine 232 and asparagine 294. Catalysis depends on aspartate 386, which acts as the Proton acceptor. A disulfide bridge connects residues cysteine 404 and cysteine 430. Tyrosine 471 (schiff-base intermediate with substrate; via topaquinone) is an active-site residue. At tyrosine 471 the chain carries 2',4',5'-topaquinone. 2 residues coordinate Cu(2+): histidine 520 and histidine 522. Ca(2+)-binding residues include aspartate 529, leucine 530, aspartate 531, and glutamate 572. An N-linked (GlcNAc...) asparagine glycan is attached at asparagine 592. A Ca(2+)-binding site is contributed by glutamate 641. N-linked (GlcNAc...) asparagine glycosylation is present at asparagine 659. Phenylalanine 663 serves as a coordination point for Ca(2+). Asparagine 666 carries an N-linked (GlcNAc...) asparagine glycan. Ca(2+) is bound by residues glutamate 667, aspartate 673, and leucine 674. Histidine 684 contributes to the Cu(2+) binding site. Cysteines 734 and 741 form a disulfide.

Belongs to the copper/topaquinone oxidase family. In terms of assembly, homodimer; disulfide-linked. Probably forms heterodimers with AOC2. Cu(2+) serves as cofactor. Requires Ca(2+) as cofactor. L-topaquinone is required as a cofactor. Topaquinone (TPQ) is generated by copper-dependent autoxidation of a specific tyrosyl residue. In terms of processing, N- and O-glycosylated.

It localises to the cell membrane. The enzyme catalyses methylamine + O2 + H2O = formaldehyde + H2O2 + NH4(+). The catalysed reaction is benzylamine + O2 + H2O = benzaldehyde + H2O2 + NH4(+). It carries out the reaction 2-phenylethylamine + O2 + H2O = 2-phenylacetaldehyde + H2O2 + NH4(+). Catalyzes the oxidative deamination of primary amines to the corresponding aldehydes with the concomitant production of hydrogen peroxide and ammonia. Has a preference for the primary monoamines methylamine and benzylamine. Could also act on 2-phenylethylamine but much less efficiently. At endothelial cells surface can also function as a cell adhesion protein that participates in lymphocyte extravasation and recirculation by mediating the binding of lymphocytes to peripheral lymph node vascular endothelial cells in an L-selectin-independent fashion. The protein is Amine oxidase [copper-containing] 3 of Mus musculus (Mouse).